A 341-amino-acid polypeptide reads, in one-letter code: L-threonine 3-dehydrogenase (341 aa).

A Zn(2+)-binding site is contributed by Cys38. Residues Thr40 and His43 each act as charge relay system in the active site. Zn(2+) is bound by residues His63, Glu64, Cys93, Cys96, Cys99, and Cys107. NAD(+)-binding positions include Ile175, Asp195, Arg200, 262–264 (LGI), and 286–287 (IY).

Belongs to the zinc-containing alcohol dehydrogenase family. In terms of assembly, homotetramer. Zn(2+) serves as cofactor.

It localises to the cytoplasm. The enzyme catalyses L-threonine + NAD(+) = (2S)-2-amino-3-oxobutanoate + NADH + H(+). The protein operates within amino-acid degradation; L-threonine degradation via oxydo-reductase pathway; glycine from L-threonine: step 1/2. Catalyzes the NAD(+)-dependent oxidation of L-threonine to 2-amino-3-ketobutyrate. This Shewanella baltica (strain OS223) protein is L-threonine 3-dehydrogenase.